Here is a 216-residue protein sequence, read N- to C-terminus: MOB kinase activator 1B (216 aa).

S2 carries the post-translational modification N-acetylserine. A phosphothreonine; by STK4/MST1 mark is found at T12 and T35. Zn(2+) is bound by residues C79, C84, H161, and H166.

This sequence belongs to the MOB1/phocein family. As to quaternary structure, binds STK38L. Interacts with LATS1 and LATS2. Post-translationally, phosphorylated by STK3/MST2 and STK4/MST1 and this phosphorylation enhances its binding to LATS1. In terms of tissue distribution, adrenal gland, bone marrow, brain, lung, placenta, prostate, salivary gland, skeletal muscle, testis, thymus, thyroid gland, uterus, colon with mucosa, fetal brain and fetal liver.

Its subcellular location is the cytoplasm. It localises to the nucleus. Functionally, activator of LATS1/2 in the Hippo signaling pathway which plays a pivotal role in organ size control and tumor suppression by restricting proliferation and promoting apoptosis. The core of this pathway is composed of a kinase cascade wherein STK3/MST2 and STK4/MST1, in complex with its regulatory protein SAV1, phosphorylates and activates LATS1/2 in complex with its regulatory protein MOB1, which in turn phosphorylates and inactivates YAP1 oncoprotein and WWTR1/TAZ. Phosphorylation of YAP1 by LATS1/2 inhibits its translocation into the nucleus to regulate cellular genes important for cell proliferation, cell death, and cell migration. Stimulates the kinase activity of STK38L. The sequence is that of MOB kinase activator 1B from Homo sapiens (Human).